A 393-amino-acid chain; its full sequence is BEN domain-containing protein 5 (393 aa).

Positions 169-212 (RVLYEELLRSYQQQQQEMKHIQHELERTRKQLVQQAKKLKDYGS) form a coiled coil. The 107-residue stretch at 274–380 (GSGVWVNEEK…EKIMDINKSC (107 aa)) folds into the BEN domain.

Its function is as follows. May act as a transcriptional repressor. This chain is BEN domain-containing protein 5 (bend5), found in Xenopus laevis (African clawed frog).